A 65-amino-acid chain; its full sequence is MPTITVSSTSSLCGQALSGNPTFAEHLVRMGITSVSVHSGAIAATPGSVAAAERRLLLESARGDA.

This is an uncharacterized protein from Mycobacterium tuberculosis (strain ATCC 25618 / H37Rv).